Reading from the N-terminus, the 322-residue chain is Transaldolase (322 aa).

K132 serves as the catalytic Schiff-base intermediate with substrate.

This sequence belongs to the transaldolase family. Type 1 subfamily. Homodimer.

Its subcellular location is the cytoplasm. The catalysed reaction is D-sedoheptulose 7-phosphate + D-glyceraldehyde 3-phosphate = D-erythrose 4-phosphate + beta-D-fructose 6-phosphate. The protein operates within carbohydrate degradation; pentose phosphate pathway; D-glyceraldehyde 3-phosphate and beta-D-fructose 6-phosphate from D-ribose 5-phosphate and D-xylulose 5-phosphate (non-oxidative stage): step 2/3. Its function is as follows. Transaldolase is important for the balance of metabolites in the pentose-phosphate pathway. This is Transaldolase from Protochlamydia amoebophila (strain UWE25).